A 969-amino-acid chain; its full sequence is RNA polymerase-associated protein RapA (969 aa).

Residues 164–334 form the Helicase ATP-binding domain; that stretch reads EVGRRHAPRV…FARLRLLDSD (171 aa). ATP is bound at residue 177–184; it reads DEVGLGKT. Residues 280 to 283 carry the DEAH box motif; that stretch reads DEAH. The Helicase C-terminal domain maps to 492 to 668; that stretch reads RVNWLLEKLK…GSNEALNDVI (177 aa).

Belongs to the SNF2/RAD54 helicase family. RapA subfamily. Interacts with the RNAP. Has a higher affinity for the core RNAP than for the holoenzyme. Its ATPase activity is stimulated by binding to RNAP.

Transcription regulator that activates transcription by stimulating RNA polymerase (RNAP) recycling in case of stress conditions such as supercoiled DNA or high salt concentrations. Probably acts by releasing the RNAP, when it is trapped or immobilized on tightly supercoiled DNA. Does not activate transcription on linear DNA. Probably not involved in DNA repair. In Vibrio vulnificus (strain YJ016), this protein is RNA polymerase-associated protein RapA.